The primary structure comprises 156 residues: 6,7-dimethyl-8-ribityllumazine synthase (156 aa).

5-amino-6-(D-ribitylamino)uracil is bound by residues phenylalanine 24, 56–58, and 80–82; these read SFE and AVV. 85–86 contributes to the (2S)-2-hydroxy-3-oxobutyl phosphate binding site; that stretch reads ET. Histidine 88 acts as the Proton donor in catalysis. Phenylalanine 113 contributes to the 5-amino-6-(D-ribitylamino)uracil binding site. Arginine 127 provides a ligand contact to (2S)-2-hydroxy-3-oxobutyl phosphate.

It belongs to the DMRL synthase family.

It catalyses the reaction (2S)-2-hydroxy-3-oxobutyl phosphate + 5-amino-6-(D-ribitylamino)uracil = 6,7-dimethyl-8-(1-D-ribityl)lumazine + phosphate + 2 H2O + H(+). The protein operates within cofactor biosynthesis; riboflavin biosynthesis; riboflavin from 2-hydroxy-3-oxobutyl phosphate and 5-amino-6-(D-ribitylamino)uracil: step 1/2. In terms of biological role, catalyzes the formation of 6,7-dimethyl-8-ribityllumazine by condensation of 5-amino-6-(D-ribitylamino)uracil with 3,4-dihydroxy-2-butanone 4-phosphate. This is the penultimate step in the biosynthesis of riboflavin. The chain is 6,7-dimethyl-8-ribityllumazine synthase from Thermococcus kodakarensis (strain ATCC BAA-918 / JCM 12380 / KOD1) (Pyrococcus kodakaraensis (strain KOD1)).